A 139-amino-acid chain; its full sequence is Glucanase inhibitor protein 3 (139 aa).

Residues 1-138 (VLTLEKPSKF…GIEWINSVIK (138 aa)) enclose the Peptidase S1 domain. Cystine bridges form between C61-C73 and C83-C114.

This sequence belongs to the peptidase S1 family.

It localises to the secreted. Its function is as follows. Secreted effector that suppresses host plant glucan elicitor-mediated defense responses. Targets host endoglucanases and inhibits the endoglucanase-mediated release of elicitor-active glucan oligosaccharides from P.sojae cell walls. The polypeptide is Glucanase inhibitor protein 3 (Phytophthora sojae (Soybean stem and root rot agent)).